Consider the following 333-residue polypeptide: L-lactate dehydrogenase B chain (333 aa).

NAD(+) is bound by residues 29–57 (GQVG…IEDK) and Arg99. The substrate site is built by Arg106, Asn138, and Arg169. Asn138 lines the NAD(+) pocket. Catalysis depends on His193, which acts as the Proton acceptor. Substrate is bound at residue Thr248.

It belongs to the LDH/MDH superfamily. LDH family. Homotetramer.

The protein localises to the cytoplasm. The enzyme catalyses (S)-lactate + NAD(+) = pyruvate + NADH + H(+). It functions in the pathway fermentation; pyruvate fermentation to lactate; (S)-lactate from pyruvate: step 1/1. Interconverts simultaneously and stereospecifically pyruvate and lactate with concomitant interconversion of NADH and NAD(+). The sequence is that of L-lactate dehydrogenase B chain (ldhb) from Anguilla rostrata (American eel).